A 213-amino-acid polypeptide reads, in one-letter code: Orotate phosphoribosyltransferase (213 aa).

Lys26 is a binding site for 5-phospho-alpha-D-ribose 1-diphosphate. 34 to 35 (FF) provides a ligand contact to orotate. 5-phospho-alpha-D-ribose 1-diphosphate-binding positions include 72 to 73 (YK), Arg99, Lys100, Lys103, His105, and 124 to 132 (DDVITAGTA). Thr128 and Arg156 together coordinate orotate.

It belongs to the purine/pyrimidine phosphoribosyltransferase family. PyrE subfamily. In terms of assembly, homodimer. Requires Mg(2+) as cofactor.

It catalyses the reaction orotidine 5'-phosphate + diphosphate = orotate + 5-phospho-alpha-D-ribose 1-diphosphate. The protein operates within pyrimidine metabolism; UMP biosynthesis via de novo pathway; UMP from orotate: step 1/2. Catalyzes the transfer of a ribosyl phosphate group from 5-phosphoribose 1-diphosphate to orotate, leading to the formation of orotidine monophosphate (OMP). This is Orotate phosphoribosyltransferase from Escherichia coli O157:H7.